The following is a 537-amino-acid chain: MSWKVVLLLVLLATPTGGLEESYLEESCSTVTRGYLSVLRTGWYTNVFTLEVGDVENLTCTDGPSLIRTELELTKNALEELKTVSADQLAKEARIMSPRKARFVLGAIALGVATAAAVTAGVAIAKTIRLEGEVAAIKGALRKTNEAVSTLGNGVRVLATAVNDLKDFISKKLTPAINKNKCDISDLKMAVSFGQYNRRFLNVVRQFSDNAGITPAISLDLMTDAELVRAVSNMPTSSGQINLMLENRAMVRRKGFGILIGVYGSSVVYMVQLPIFGVIDTPCWKVKAAPLCSGKDGSYACLLREDQGWYCQNAGSTVYYPNEEDCEVRSDHVFCDTAAGINVAKESEECNRNISTTKYPCKVSTGRHPISMVALSPLGALVACYDGVSCSIGSNKVGIIRPLGKGCSYISNQDADTVTIDNPVYQLSKVEGEQHTIKGKPVSSNFDPIEFPEDQFNIALDQVFESVEKSKNLIDQSNKILDSTEKGNAGFVMVIVLIVLLMLAAVGVGIFFVVKKRKAAPKFPMEMNGVNNKGFIP.

Positions 1 to 18 (MSWKVVLLLVLLATPTGG) are cleaved as a signal peptide. The Extracellular portion of the chain corresponds to 27 to 493 (SCSTVTRGYL…TEKGNAGFVM (467 aa)). Disulfide bonds link cysteine 28–cysteine 407, cysteine 60–cysteine 182, cysteine 283–cysteine 311, cysteine 292–cysteine 301, cysteine 326–cysteine 335, cysteine 350–cysteine 361, and cysteine 384–cysteine 390. The N-linked (GlcNAc...) asparagine; by host glycan is linked to asparagine 57. 2 fusion peptide regions span residues 103 to 124 (FVLGAIALGVATAAAVTAGVAI) and 103 to 127 (FVLGAIALGVATAAAVTAGVAIAKT). Positions 125–153 (AKTIRLEGEVAAIKGALRKTNEAVSTLGN) form a coiled coil. A glycan (N-linked (GlcNAc...) asparagine; by host) is linked at asparagine 353. Positions 459 to 484 (ALDQVFESVEKSKNLIDQSNKILDST) form a coiled coil. Residues 494–514 (VIVLIVLLMLAAVGVGIFFVV) form a helical membrane-spanning segment. At 515-537 (KKRKAAPKFPMEMNGVNNKGFIP) the chain is on the cytoplasmic side.

The protein belongs to the paramyxoviruses fusion glycoprotein family. Homotrimer. Heterodimer with fusion protein F2; disulfide-linked. As a heterodimer with F2, interacts with host heparan sulfate. Part of a complex composed of F1, F2 and G glycoproteins. In terms of assembly, homotrimer. Heterodimer with fusion protein F1; disulfide-linked. As a heterodimer with F1, interacts with host heparan sulfate. Part of a complex composed of F1, F2 and G glycoproteins. In terms of processing, the F glycoprotein is synthesized as a F0 inactive precursor that is heavily N-glycosylated and processed.

It is found in the host Golgi apparatus membrane. It localises to the virion membrane. Its subcellular location is the host cell membrane. Functionally, inactive precursor that is cleaved to give rise to the mature F1 and F2 fusion glycoproteins. Class I viral fusion protein. Under the current model, the protein has at least 3 conformational states: pre-fusion native state, pre-hairpin intermediate state, and post-fusion hairpin state. During viral and plasma cell membrane fusion, the coiled coil regions assume a trimer-of-hairpins structure, positioning the fusion peptide in close proximity to the C-terminal region of the ectodomain. The formation of this structure appears to drive apposition and subsequent fusion of viral and cellular membranes leading to delivery of the nucleocapsid into the cytoplasm. This fusion is pH independent and occurs at the plasma or endosomal membrane. The trimer of F1-F2 (F protein) also facilitates the attachment to host cell by binding to host heparan sulfate. In terms of biological role, major determinant of the species specificity of RSV infection. The trimer of F1-F2 (F protein) also facilitates the attachment to host cell by binding to host heparan sulfate. This chain is Fusion glycoprotein F0 (F), found in Avian metapneumovirus (isolate Canada goose/Minnesota/15a/2001) (AMPV).